A 561-amino-acid polypeptide reads, in one-letter code: DISARM protein DrmB (561 aa).

The protein localises to the cytoplasm. Its function is as follows. Component of antiviral defense system DISARM (defense island system associated with restriction-modification), composed of DrmE, DrmA, DrmB, DrmC and DrmMII. DISARM is probably a multi-gene restriction module, this subunit has an unknown function. Expression of DISARM in B.subtilis (strain BEST7003) confers resistance to phages Nf, phi29, phi105, phi3T, SPO1, SPR and SPP1. Protection is over 10(7)-fold against phi3T, 10(4)-10(5)-fold against Nf, phi29, phi105 and SPR, 100-fold against SPO1 and 10-fold against SPP1. DISARM does not interfere with phage adsorption, but instead interferes with (phi3T) DNA replication early in its cycle, preventing replication, circularization and lysogeny and probably causes phage DNA degradation (DNA is degraded in SPP1-infected cells). This Bacillus paralicheniformis (strain ATCC 9945a / NCIMB 11709 / CD-2) protein is DISARM protein DrmB.